Consider the following 286-residue polypeptide: Transcription factor MYB62 (286 aa).

HTH myb-type domains follow at residues 16-68 and 69-123; these read DEEL…LNYL and KPDI…QKQA. DNA-binding regions (H-T-H motif) lie at residues 44-68 and 96-119; these read WNHV…LNYL and WSKI…RTRV.

In terms of tissue distribution, expressed in leaves and flowers.

Its subcellular location is the nucleus. Functionally, transcription repressor of phosphate (Pi) starvation-induced genes. Negatively regulates Pi starvation responses via the repression of gibberellic acid (GA) biosynthesis and signaling. Modulates root architecture, phosphatase activity, and Pi uptake and accumulation. The protein is Transcription factor MYB62 of Arabidopsis thaliana (Mouse-ear cress).